A 350-amino-acid chain; its full sequence is tRNA uridine(34) hydroxylase (350 aa).

One can recognise a Rhodanese domain in the interval 146 to 240; it reads DDPDALFIDM…YARKAREQGL (95 aa). Cys-200 acts as the Cysteine persulfide intermediate in catalysis.

This sequence belongs to the TrhO family.

The enzyme catalyses uridine(34) in tRNA + AH2 + O2 = 5-hydroxyuridine(34) in tRNA + A + H2O. Functionally, catalyzes oxygen-dependent 5-hydroxyuridine (ho5U) modification at position 34 in tRNAs, the first step in 5-carboxymethoxyuridine (cmo5U) biosynthesis. May be part of an alternate pathway, which is able to bypass cmo5U biogenesis in a subset of tRNAs under aerobic conditions. In Escherichia coli O9:H4 (strain HS), this protein is tRNA uridine(34) hydroxylase.